The chain runs to 26 residues: Toxin TdII-1 (26 aa).

The protein belongs to the long (4 C-C) scorpion toxin superfamily. Sodium channel inhibitor family. Beta subfamily. As to expression, expressed by the venom gland.

It localises to the secreted. In terms of biological role, beta toxins bind voltage-independently at site-4 of sodium channels (Nav) and shift the voltage of activation toward more negative potentials thereby affecting sodium channel activation and promoting spontaneous and repetitive firing. This toxin is active against mammals and crustaceans. The sequence is that of Toxin TdII-1 from Tityus discrepans (Venezuelan scorpion).